Here is a 365-residue protein sequence, read N- to C-terminus: MNLAAMDPNTYDAQLEEKRIKLEQIFTDFDTPKLEVFSSEPAHYRMRAEFRIWHDGEDMYYYMFDKALDSKVRCDQFLPASELINKVMPALMEELRPNPTLRHRLFQIDFLSTLSGEILVSLLYHKQLDAQWEIEAKALKEKLAATFNINIIGRARKQKLIIDKDFVIESLTVNNEQLQYHQIENSFTQPNGKVSVKMLEWAIDVTKNSQGDLLELYCGNGNFSIALAQNFDRVLATELAKPSVESAQYNIKINKIDNLQIIRMSAEDFTDAMAKKRTFRRLEGIDLDSYNCNTIFVDPPRAGMDPDTVKLVQGYDRIVYISCNPNTLIDNLAELSKTHKITRFALFDQFPYTDHMESGVFLERR.

S-adenosyl-L-methionine-binding residues include Q189, Y217, N222, E238, and D298. C323 serves as the catalytic Nucleophile. The active-site Proton acceptor is the E357.

Belongs to the class I-like SAM-binding methyltransferase superfamily. RNA M5U methyltransferase family. TrmA subfamily.

It catalyses the reaction uridine(54) in tRNA + S-adenosyl-L-methionine = 5-methyluridine(54) in tRNA + S-adenosyl-L-homocysteine + H(+). The catalysed reaction is uridine(341) in tmRNA + S-adenosyl-L-methionine = 5-methyluridine(341) in tmRNA + S-adenosyl-L-homocysteine + H(+). Its function is as follows. Dual-specificity methyltransferase that catalyzes the formation of 5-methyluridine at position 54 (m5U54) in all tRNAs, and that of position 341 (m5U341) in tmRNA (transfer-mRNA). This is tRNA/tmRNA (uracil-C(5))-methyltransferase from Shewanella sediminis (strain HAW-EB3).